Reading from the N-terminus, the 266-residue chain is Thymidylate synthase (266 aa).

Arg-24 provides a ligand contact to dUMP. His-54 contributes to the (6R)-5,10-methylene-5,6,7,8-tetrahydrofolate binding site. Position 129–130 (129–130 (RR)) interacts with dUMP. Cys-149 acts as the Nucleophile in catalysis. DUMP contacts are provided by residues 169–172 (RSAD), Asn-180, and 210–212 (HIY). Asp-172 lines the (6R)-5,10-methylene-5,6,7,8-tetrahydrofolate pocket. (6R)-5,10-methylene-5,6,7,8-tetrahydrofolate is bound at residue Ala-265.

It belongs to the thymidylate synthase family. Bacterial-type ThyA subfamily. Homodimer.

It localises to the cytoplasm. The catalysed reaction is dUMP + (6R)-5,10-methylene-5,6,7,8-tetrahydrofolate = 7,8-dihydrofolate + dTMP. Its pathway is pyrimidine metabolism; dTTP biosynthesis. Functionally, catalyzes the reductive methylation of 2'-deoxyuridine-5'-monophosphate (dUMP) to 2'-deoxythymidine-5'-monophosphate (dTMP) while utilizing 5,10-methylenetetrahydrofolate (mTHF) as the methyl donor and reductant in the reaction, yielding dihydrofolate (DHF) as a by-product. This enzymatic reaction provides an intracellular de novo source of dTMP, an essential precursor for DNA biosynthesis. This Mycobacterium sp. (strain KMS) protein is Thymidylate synthase.